An 81-amino-acid chain; its full sequence is MKTLLLTLVVVTTVCLDLGYTLKCNKLVPLFYKTCPAGKNLCYKMYMVATPKVPVKRGCIDVCPKSSLLVKYVCCNTDRCN.

The signal sequence occupies residues 1–21; the sequence is MKTLLLTLVVVTTVCLDLGYT. 4 disulfide bridges follow: Cys24-Cys42, Cys35-Cys59, Cys63-Cys74, and Cys75-Cys80.

This sequence belongs to the three-finger toxin family. Short-chain subfamily. Type IA cytotoxin sub-subfamily. Monomer in solution; Homodimer and oligomer in the presence of negatively charged lipids forming a pore with a size ranging between 20 and 30 Angstroms. As to expression, expressed by the venom gland.

The protein localises to the secreted. It is found in the target cell membrane. Shows cytolytic activity on many different cells by forming pore in lipid membranes. In vivo, increases heart rate or kills the animal by cardiac arrest. In addition, it binds to heparin with high affinity, interacts with Kv channel-interacting protein 1 (KCNIP1) in a calcium-independent manner, and binds to integrin alpha-V/beta-3 (ITGAV/ITGB3) with moderate affinity. The protein is Cytotoxin 2b of Naja sputatrix (Malayan spitting cobra).